The primary structure comprises 562 residues: Potassium-transporting ATPase potassium-binding subunit (562 aa).

Transmembrane regions (helical) follow at residues 6–26 (FLLI…LGSF), 63–83 (ALAI…LLMM), 132–152 (GLTV…FALI), 175–195 (LYVL…QGVL), 253–273 (FVQM…FGQV), 283–303 (LIWA…YAEL), 327–347 (FGIL…CGAV), 356–376 (ALGG…FGGV), 379–399 (GLYG…LMIG), 416–436 (MTAL…ALAL), 483–503 (LLLA…VLAI), and 526–546 (LFIG…FIPA).

Belongs to the KdpA family. As to quaternary structure, the system is composed of three essential subunits: KdpA, KdpB and KdpC.

It localises to the cell inner membrane. Part of the high-affinity ATP-driven potassium transport (or Kdp) system, which catalyzes the hydrolysis of ATP coupled with the electrogenic transport of potassium into the cytoplasm. This subunit binds the periplasmic potassium ions and delivers the ions to the membrane domain of KdpB through an intramembrane tunnel. This Yersinia enterocolitica serotype O:8 / biotype 1B (strain NCTC 13174 / 8081) protein is Potassium-transporting ATPase potassium-binding subunit.